The chain runs to 158 residues: MKISILAVGGKMPAWVQEGYAEYAKRLPREIEPRMVELALANRSKSYSVDAVKQAEGEQILGAYDNAPGHKRLICLDVLGKSLRTEMLAEKMAAWQMDGVNPCLVIGGPDGLSQSCLQRADEKWSLSGLTMPHPLVRVLLIEQLYRAWTILQNHPYHK.

S-adenosyl-L-methionine-binding positions include leucine 76, glycine 107, and 126–131 (LSGLTM).

It belongs to the RNA methyltransferase RlmH family. As to quaternary structure, homodimer.

It is found in the cytoplasm. It catalyses the reaction pseudouridine(1915) in 23S rRNA + S-adenosyl-L-methionine = N(3)-methylpseudouridine(1915) in 23S rRNA + S-adenosyl-L-homocysteine + H(+). In terms of biological role, specifically methylates the pseudouridine at position 1915 (m3Psi1915) in 23S rRNA. The chain is Ribosomal RNA large subunit methyltransferase H from Teredinibacter turnerae (strain ATCC 39867 / T7901).